The following is a 433-amino-acid chain: Histidinol dehydrogenase 2 (433 aa).

Residues Tyr-130, Gln-192, and Asn-215 each contribute to the NAD(+) site. Substrate-binding residues include Ser-238, Gln-260, and His-263. Zn(2+)-binding residues include Gln-260 and His-263. Active-site proton acceptor residues include Glu-328 and His-329. His-329, Asp-362, Glu-416, and His-421 together coordinate substrate. Position 362 (Asp-362) interacts with Zn(2+). His-421 is a Zn(2+) binding site.

This sequence belongs to the histidinol dehydrogenase family. The cofactor is Zn(2+).

The catalysed reaction is L-histidinol + 2 NAD(+) + H2O = L-histidine + 2 NADH + 3 H(+). The protein operates within amino-acid biosynthesis; L-histidine biosynthesis; L-histidine from 5-phospho-alpha-D-ribose 1-diphosphate: step 9/9. Functionally, catalyzes the sequential NAD-dependent oxidations of L-histidinol to L-histidinaldehyde and then to L-histidine. This is Histidinol dehydrogenase 2 from Trichormus variabilis (strain ATCC 29413 / PCC 7937) (Anabaena variabilis).